A 412-amino-acid polypeptide reads, in one-letter code: Adenosine receptor A2a (412 aa).

Residues 1–7 (MPIMGSS) are Extracellular-facing. A helical transmembrane segment spans residues 8 to 32 (VYITVELAIAVLAILGNVLVCWAVW). Over 33 to 42 (LNSNLQNVTN) the chain is Cytoplasmic. A helical transmembrane segment spans residues 43 to 66 (YFVVSLAAADIAVGVLAIPFAITI). Residues 67 to 77 (STGFCAACHGC) lie on the Extracellular side of the membrane. Cystine bridges form between Cys71-Cys159, Cys74-Cys146, and Cys77-Cys166. A helical membrane pass occupies residues 78 to 100 (LFIACFVLVLTQSSIFSLLAIAI). Over 101 to 120 (DRYIAIRIPLRYNGLVTGTR) the chain is Cytoplasmic. The helical transmembrane segment at 121 to 143 (AKGIIAICWVLSFAIGLTPMLGW) threads the bilayer. Residues 144-173 (NNCGQPKEGKNHSQGCGEGQVACLFEDVVP) are Extracellular-facing. Asn154 is a glycosylation site (N-linked (GlcNAc...) asparagine). Glu169 serves as a coordination point for adenosine. The chain crosses the membrane as a helical span at residues 174–198 (MNYMVYFNFFACVLVPLLLMLGVYL). The Cytoplasmic segment spans residues 199 to 234 (RIFLAARRQLKQMESQPLPGERARSTLQKEVHAAKS). The chain crosses the membrane as a helical span at residues 235–258 (LAIIVGLFALCWLPLHIINCFTFF). Position 253 (Asn253) interacts with adenosine. Cys259 and Cys262 are disulfide-bonded. Topologically, residues 259–266 (CPDCSHAP) are extracellular. The helical transmembrane segment at 267–290 (LWLMYLAIVLSHTNSVVNPFIYAY) threads the bilayer. Residues Ser277 and His278 each contribute to the adenosine site. Topologically, residues 291–412 (RIREFRQTFR…PLAQDGAGVS (122 aa)) are cytoplasmic. Positions 391 to 412 (KGVCPEPPGLDDPLAQDGAGVS) are disordered.

It belongs to the G-protein coupled receptor 1 family. In terms of assembly, interacts (via cytoplasmic C-terminal domain) with USP4; the interaction is direct. May interact with DRD4. Interacts with NECAB2. Interacts (via cytoplasmic C-terminal domain) with GAS2L2; interaction enhances receptor-mediated adenylyl cyclase activity. Ubiquitinated. Deubiquitinated by USP4; leading to stabilization and expression at the cell surface.

The protein resides in the cell membrane. Receptor for adenosine. The activity of this receptor is mediated by G proteins which activate adenylyl cyclase. The chain is Adenosine receptor A2a (ADORA2A) from Homo sapiens (Human).